A 1875-amino-acid chain; its full sequence is Protein MLP1 (1875 aa).

Residue S2 is modified to N-acetylserine. 2 coiled-coil regions span residues 69–487 and 531–1678; these read ELKA…IQYL and ERLV…SAES. T337 carries the post-translational modification Phosphothreonine. At S379 the chain carries Phosphoserine. A Required for nuclear localization motif is present at residues 1496-1565; it reads QPSNINMEEI…EEKVEERIKS (70 aa). The disordered stretch occupies residues 1641-1689; sequence KKSFDEGKQQAMMKTTLLERKLAKMESQLSETKQSAESPPKSVNNVQNP. Positions 1667–1688 are enriched in polar residues; the sequence is SQLSETKQSAESPPKSVNNVQN. A phosphoserine mark is found at S1670 and S1710. The segment covering 1716-1725 has biased composition (low complexity); that stretch reads KLNSKSSSGG. The tract at residues 1716–1875 is disordered; it reads KLNSKSSSGG…TDKVNDENSI (160 aa). Polar residues predominate over residues 1728-1737; the sequence is PFTSPSPNKH. The residue at position 1733 (S1733) is a Phosphoserine. Basic and acidic residues predominate over residues 1738 to 1748; the sequence is LQNDNDKRESL. Positions 1787 to 1801 are enriched in polar residues; sequence TSNNPAQKDSSNRNV. At S1803 the chain carries Phosphoserine. Composition is skewed to basic and acidic residues over residues 1807 to 1840 and 1865 to 1875; these read TEKK…GELK and ETDKVNDENSI. A coiled-coil region spans residues 1834 to 1866; the sequence is DEVGELKNDEDDTTENINESKKIKTEDEEEKET.

As to quaternary structure, component of the nuclear pore complex (NPC). NPC constitutes the exclusive means of nucleocytoplasmic transport. NPCs allow the passive diffusion of ions and small molecules and the active, nuclear transport receptor-mediated bidirectional transport of macromolecules such as proteins, RNAs, ribonucleoparticles (RNPs), and ribosomal subunits across the nuclear envelope. Due to its 8-fold rotational symmetry, all subunits are present with 8 copies or multiples thereof. Interacts with NAB2, a hnRNP required for mRNA export. Interacts with MLP2. May be phosphorylated by CDC28.

Its subcellular location is the nucleus. It localises to the nuclear pore complex. Functionally, together with the closely related MLP2, involved in the structural and functional organization of perinuclear chromatin. Together with MLP2, associates with the nuclear pore complex and form filamentous structures along the nuclear periphery. Has a role in the localization of Esc1 to nucleolar regions. Together with MLP2, mediates tethering of the some telomeres to the nuclear periphery, probably mediated by YKU70/YKU80 (HDF1/HDF2) heterodimer and show perinuclear location dependent silencing. MLP1 and MLP2 are involved in telomere length regulation but not silencing or telomere anchoring. Recognizes the 5'-splice site of pre-mRNAs and retains unspliced pre-mRNA in the nucleus without affecting splicing itself. This Saccharomyces cerevisiae (strain ATCC 204508 / S288c) (Baker's yeast) protein is Protein MLP1 (MLP1).